The chain runs to 821 residues: Tip elongation aberrant protein Tea4 (821 aa).

Polar residues-rich tracts occupy residues Met1 to Asp11 and Asp21 to Ile31. The disordered stretch occupies residues Met1–Ser36. Tyr35 is modified (phosphotyrosine). Position 36 is a phosphoserine (Ser36). Tyr40 bears the Phosphotyrosine mark. The segment at Ile51–Ser79 is disordered. The segment covering Gly53 to Ser67 has biased composition (polar residues). Residues Ile130–Glu191 enclose the SH3 domain. Disordered stretches follow at residues Leu267–Thr292, Ser333–Ala352, Asp473–Asn500, Ser529–Leu570, and Asp664–Ser697. Residues Glu268–Glu282 are compositionally biased toward low complexity. Over residues Tyr283–Thr292 the composition is skewed to basic and acidic residues. 2 stretches are compositionally biased toward polar residues: residues Ser333–Ser350 and Asp473–Ala484. An interaction with tea1 region spans residues Leu527–Arg821. A compositionally biased stretch (low complexity) spans Ser529–Pro541. Positions Glu554–Glu563 are enriched in basic and acidic residues. The interaction with win1 stretch occupies residues Lys599 to Arg821. Residues Ala665 to Ile674 are compositionally biased toward low complexity. Positions Ser675–Glu687 are enriched in basic and acidic residues.

An essential component of the tea1 cell-end complex. Interacts with win1, tea1 and for3. Interacts with tip1 in the presence of tea1.

The protein localises to the cytoplasm. It is found in the cytoskeleton. Functionally, cell polarity factor essential for the bipolar localization and function of structures containing the cell-end marker tea1 during the normal cell cycle. Regulates cell polarity in complex with tea1 and together with the stress signaling MAPK cascade, contributes to cell polarity maintenance under stress conditions. Required for the localization of for3 at the cell tip specifically during initiation of bipolar growth. During the new end take off (NETO), formation of a protein complex that includes tea1, tea4 and for3 is necessary and sufficient for the establishment of cell polarity and localized actin assembly at new cell ends. This chain is Tip elongation aberrant protein Tea4, found in Schizosaccharomyces pombe (strain 972 / ATCC 24843) (Fission yeast).